We begin with the raw amino-acid sequence, 237 residues long: Probable septum site-determining protein MinC (237 aa).

Belongs to the MinC family. In terms of assembly, interacts with MinD and FtsZ.

Cell division inhibitor that blocks the formation of polar Z ring septums. Rapidly oscillates between the poles of the cell to destabilize FtsZ filaments that have formed before they mature into polar Z rings. Prevents FtsZ polymerization. This Neisseria gonorrhoeae protein is Probable septum site-determining protein MinC.